A 222-amino-acid chain; its full sequence is N-(5'-phosphoribosyl)anthranilate isomerase (222 aa).

The protein belongs to the TrpF family.

The catalysed reaction is N-(5-phospho-beta-D-ribosyl)anthranilate = 1-(2-carboxyphenylamino)-1-deoxy-D-ribulose 5-phosphate. It participates in amino-acid biosynthesis; L-tryptophan biosynthesis; L-tryptophan from chorismate: step 3/5. The protein is N-(5'-phosphoribosyl)anthranilate isomerase of Xanthomonas campestris pv. campestris (strain 8004).